The primary structure comprises 363 residues: Protein RecA (363 aa).

Position 77 to 84 (77 to 84) interacts with ATP; sequence GPESSGKT.

It belongs to the RecA family.

Its subcellular location is the cytoplasm. Can catalyze the hydrolysis of ATP in the presence of single-stranded DNA, the ATP-dependent uptake of single-stranded DNA by duplex DNA, and the ATP-dependent hybridization of homologous single-stranded DNAs. It interacts with LexA causing its activation and leading to its autocatalytic cleavage. This chain is Protein RecA, found in Agrobacterium fabrum (strain C58 / ATCC 33970) (Agrobacterium tumefaciens (strain C58)).